The following is a 204-amino-acid chain: Translation initiation factor 2 subunit beta (204 aa).

Residues 146 to 204 form the TRAM domain; that stretch reads NLEEGQVLDVEIQSLSKRGDGVVKMGRYIMYVSNAKPGQSVKIKISRISGSIVFTERAE.

It belongs to the eIF-2-beta/eIF-5 family. In terms of assembly, heterotrimer composed of an alpha, a beta and a gamma chain.

In terms of biological role, eIF-2 functions in the early steps of protein synthesis by forming a ternary complex with GTP and initiator tRNA. In Methanoregula boonei (strain DSM 21154 / JCM 14090 / 6A8), this protein is Translation initiation factor 2 subunit beta.